The chain runs to 334 residues: Glycosylinositol phosphorylceramide mannosyl transferase 1 (334 aa).

Over 1-26 (MGGGEVSKEMGACSLAYRRGDQKLRK) the chain is Cytoplasmic. Residues 27 to 49 (FVTARSTKFLLFCCIAFVLVTIV) form a helical; Signal-anchor for type II membrane protein membrane-spanning segment. At 50-334 (CRSSRPWVNS…AVDSRNLWFW (285 aa)) the chain is on the lumenal side. Residue Asn58 is glycosylated (N-linked (GlcNAc...) asparagine). Residues 145–150 (DSLNNR), 166–168 (DDD), Arg196, and 258–262 (RNCED) each bind substrate. Residue Asp168 coordinates Mn(2+). Cysteines 260 and 305 form a disulfide. Asp262 is a catalytic residue. Asn271 carries an N-linked (GlcNAc...) asparagine glycan. Substrate-binding positions include 289–302 (STGI…TEKR) and 292–302 (ISSIGGHTEKR).

This sequence belongs to the glycosyltransferase 64 family. It depends on Mn(2+) as a cofactor. As to expression, expressed in leaves, roots, stem, and flowers.

It is found in the golgi apparatus membrane. It functions in the pathway protein modification; protein glycosylation. The protein operates within sphingolipid metabolism. Mannosyl transferase (ManT) required for the biosynthesis of mannose-carrying glycosylinositol phosphorylceramides (GIPCs). Maybe involved in cell-cell adhesion that maintains the integrity of organs by providing mechanical strength and facilitating the movement of metabolites throughout the plant during development. Prevents abscisic acid- (ABA-) mediated effects on development (e.g. cell size, flowering time, senescence). Probably implicated in beta-(1,4)-galactan biosynthesis thus being a cell-wall synthesis-related (CWSR) protein. This is Glycosylinositol phosphorylceramide mannosyl transferase 1 from Arabidopsis thaliana (Mouse-ear cress).